The following is a 1203-amino-acid chain: Probable phospholipid-transporting ATPase 11 (1203 aa).

Residues 1-71 lie on the Cytoplasmic side of the membrane; the sequence is MTKCRRRRLH…STKYTLASFI (71 aa). The chain crosses the membrane as a helical span at residues 72–93; the sequence is PKSLFEQFRRVANFYFLVTGVL. Residues 94–97 lie on the Extracellular side of the membrane; that stretch reads SLTA. Residues 98–120 traverse the membrane as a helical segment; it reads LSPYSPISALLPLTFVIAASMVK. Residues 121 to 303 lie on the Cytoplasmic side of the membrane; that stretch reads EAIEDWGRKK…SRIERKMDKI (183 aa). Residues 304-325 traverse the membrane as a helical segment; it reads IYLMFGVVFLMSFIGSIVFGIE. Residues 326 to 363 lie on the Extracellular side of the membrane; that stretch reads TREDRVRNGGRTERWYLRPDNADIFFDPDRAPMAAVYH. Residues 364 to 381 form a helical membrane-spanning segment; it reads FFTAVMLYSYFIPISLYV. Over 382–921 the chain is Cytoplasmic; that stretch reads SIEIVKVLQS…HGHWCYSRIS (540 aa). Residue D429 is the 4-aspartylphosphate intermediate of the active site. Residues D866 and D870 each coordinate Mg(2+). The helical transmembrane segment at 922–941 threads the bilayer; the sequence is SMICYFFYKNITFGVTVFLY. Residues 942–955 lie on the Extracellular side of the membrane; that stretch reads EAYTSFSAQPAYND. Residues 956 to 975 traverse the membrane as a helical segment; sequence WFLSLFNVFFSSLPVIALGV. Residues 976-1005 are Cytoplasmic-facing; sequence FDQDVSARYCYKFPLLYQEGVQNLLFSWKR. A helical transmembrane segment spans residues 1006-1028; sequence IIGWMFNGVFTALAIFFLCKESL. Topologically, residues 1029 to 1041 are extracellular; sequence KHQLYNPNGKTAG. A helical transmembrane segment spans residues 1042-1064; the sequence is REILGGTMYTCVVWVVNLQMALA. The Cytoplasmic segment spans residues 1065-1070; that stretch reads ISYFTW. The helical transmembrane segment at 1071–1091 threads the bilayer; that stretch reads LQHIVIWGSVAFWYIFLMIYG. Residues 1092–1108 lie on the Extracellular side of the membrane; sequence AITPSFSTDAYKVFIEA. Residues 1109 to 1133 traverse the membrane as a helical segment; that stretch reads LAPAPSYWLTTLFVMFFALIPFFVF. Residues 1134 to 1203 are Cytoplasmic-facing; sequence KSVQMRFFPG…DQLNKNFIAF (70 aa).

The protein belongs to the cation transport ATPase (P-type) (TC 3.A.3) family. Type IV subfamily.

It localises to the membrane. The enzyme catalyses ATP + H2O + phospholipidSide 1 = ADP + phosphate + phospholipidSide 2.. Functionally, involved in transport of phospholipids. The polypeptide is Probable phospholipid-transporting ATPase 11 (Arabidopsis thaliana (Mouse-ear cress)).